We begin with the raw amino-acid sequence, 83 residues long: Small ribosomal subunit protein eS21 (83 aa).

This sequence belongs to the eukaryotic ribosomal protein eS21 family. As to quaternary structure, component of the 40S small ribosomal subunit. Interacts with sta.

The protein resides in the cytoplasm. Its subcellular location is the cytosol. It is found in the rough endoplasmic reticulum. This chain is Small ribosomal subunit protein eS21 (RpS21), found in Ceratitis capitata (Mediterranean fruit fly).